Reading from the N-terminus, the 352-residue chain is F-box/kelch-repeat protein At1g57790 (352 aa).

The region spanning Lys10–Ser56 is the F-box domain. Kelch repeat units lie at residues Val148–Val189 and Val190–Gly234.

This Arabidopsis thaliana (Mouse-ear cress) protein is F-box/kelch-repeat protein At1g57790.